The following is a 91-amino-acid chain: Probable Fe(2+)-trafficking protein (91 aa).

It belongs to the Fe(2+)-trafficking protein family. Monomer.

Its function is as follows. Could be a mediator in iron transactions between iron acquisition and iron-requiring processes, such as synthesis and/or repair of Fe-S clusters in biosynthetic enzymes. The protein is Probable Fe(2+)-trafficking protein of Escherichia coli O7:K1 (strain IAI39 / ExPEC).